We begin with the raw amino-acid sequence, 116 residues long: U11-theraphotoxin-Hhn1c (116 aa).

Positions M1–A21 are cleaved as a signal peptide. Positions D22–R74 are excised as a propeptide. Positions E61 to D83 are disordered. 3 disulfide bridges follow: C75–C90, C82–C95, and C89–C110.

This sequence belongs to the neurotoxin 14 (magi-1) family. 01 (HNTX-16) subfamily. As to expression, expressed by the venom gland.

The protein resides in the secreted. Its function is as follows. Probable ion channel inhibitor. This chain is U11-theraphotoxin-Hhn1c, found in Cyriopagopus hainanus (Chinese bird spider).